We begin with the raw amino-acid sequence, 225 residues long: Probable septum site-determining protein MinC (225 aa).

The disordered stretch occupies residues 87–112; that stretch reads PTHMASPQGNSSKTRSSDTQPKPKTP. Residues 91-108 show a composition bias toward polar residues; that stretch reads ASPQGNSSKTRSSDTQPK.

It belongs to the MinC family. In terms of assembly, interacts with MinD and FtsZ.

In terms of biological role, cell division inhibitor that blocks the formation of polar Z ring septums. Rapidly oscillates between the poles of the cell to destabilize FtsZ filaments that have formed before they mature into polar Z rings. Prevents FtsZ polymerization. The chain is Probable septum site-determining protein MinC from Prochlorococcus marinus (strain MIT 9313).